Consider the following 1189-residue polypeptide: Tyrosine-protein phosphatase non-receptor type 14 (1189 aa).

The FERM domain occupies 21-306 (FVTRIRLLDS…TRHKFYKQNK (286 aa)). 7 positions are modified to phosphoserine: Ser-314, Ser-461, Ser-486, Ser-591, Ser-593, Ser-594, and Ser-646. A disordered region spans residues 744-775 (ARIPNRPPPEYPGPRKSVSNGALRQDQGTPLP). The segment covering 760–771 (SVSNGALRQDQG) has biased composition (polar residues). Ser-833 is subject to Phosphoserine. The region spanning 911-1182 (VFTEYEQIPN…KFVYQVLVQF (272 aa)) is the Tyrosine-protein phosphatase domain. The Phosphocysteine intermediate role is filled by Cys-1123. Residues 1123–1129 (CSAGVGR) and Gln-1167 each bind substrate.

This sequence belongs to the protein-tyrosine phosphatase family. Non-receptor class subfamily. As to quaternary structure, interacts with FLT4; the interaction is enhanced by stimulation with VEGFC. Interacts (via PPxY motifs) with YAP1 (via WW domains); this interaction leads to the cytoplasmic sequestration of YAP1 and inhibits its transcriptional coactivator activity. Ubiquitinated by the ECS (Elongin BC-CUL2/5-SOCS-box protein)/LRR1 E3 ligase complex and subsequently targeted to proteasomal degradation. Thymus; in cells of both hematopoietic and non-hematopoietic origins.

The protein resides in the cytoplasm. It is found in the cytoskeleton. Its subcellular location is the nucleus. The enzyme catalyses O-phospho-L-tyrosyl-[protein] + H2O = L-tyrosyl-[protein] + phosphate. Its function is as follows. Protein tyrosine phosphatase which may play a role in the regulation of lymphangiogenesis, cell-cell adhesion, cell-matrix adhesion, cell migration, cell growth and also regulates TGF-beta gene expression, thereby modulating epithelial-mesenchymal transition. Mediates beta-catenin dephosphorylation at adhesion junctions. Acts as a negative regulator of the oncogenic property of YAP, a downstream target of the hippo pathway, in a cell density-dependent manner. May function as a tumor suppressor. The chain is Tyrosine-protein phosphatase non-receptor type 14 (Ptpn14) from Mus musculus (Mouse).